Here is a 470-residue protein sequence, read N- to C-terminus: Poly(A) polymerase catalytic subunit (470 aa).

Catalysis depends on residues D192 and D194.

This sequence belongs to the poxviridae poly(A) polymerase catalytic subunit family. Heterodimer of a large (catalytic) subunit and a small (regulatory) subunit.

It carries out the reaction RNA(n) + ATP = RNA(n)-3'-adenine ribonucleotide + diphosphate. Functionally, polymerase that creates the 3'-poly(A) tail of mRNA's. The chain is Poly(A) polymerase catalytic subunit (PAPL) from Sus scrofa (Pig).